A 578-amino-acid polypeptide reads, in one-letter code: NADPH oxidase 4 (578 aa).

Topologically, residues 1-16 (MAVSWRSWLANEGVKH) are cytoplasmic. A helical transmembrane segment spans residues 17-37 (LCLFIWLSMNVLLFWKTFLLY). Residues 38–62 (NQGPEYHYLHQMLGLGLCLSRASAS) are Extracellular-facing. Residues 58–303 (RASASVLNLN…YCAERLYRYI (246 aa)) form the Ferric oxidoreductase domain. Residues 63–83 (VLNLNCSLILLPMCRTLLAYL) traverse the membrane as a helical segment. The Cytoplasmic segment spans residues 84–103 (RGSQKVPSRRTRRLLDKSRT). A helical transmembrane segment spans residues 104–124 (FHITCGVTICIFSGVHVAAHL). The Extracellular portion of the chain corresponds to 125–154 (VNALNFSVNYSEDFVELNAARYRDEDPRKL). The N-linked (GlcNAc...) asparagine glycan is linked to Asn133. The chain crosses the membrane as a helical span at residues 155-175 (LFTTVPGLTGVCMVVVLFLMI). Over 176 to 188 (TASTYAIRVSNYD) the chain is Cytoplasmic. Residues 189–209 (IFWYTHNLFFVFYMLLTLHVS) form a helical membrane-spanning segment. Topologically, residues 210–424 (GGLLKYQTNL…SPFEESLNYE (215 aa)) are extracellular. The tract at residues 218–273 (NLDTHPPGCISLNRTSSQNISLPEYFSEHFHEPFPEGFSKPAEFTQHKFVKICMEE) is E-loop; essential for H2O2 generating catalytic activity. Asn230 carries N-linked (GlcNAc...) asparagine glycosylation. The mediates interaction with TLR4 stretch occupies residues 248-575 (HEPFPEGFSK…YGTRFEYNKE (328 aa)). The 116-residue stretch at 304–419 (RSNKPVTIIS…DGPFGSPFEE (116 aa)) folds into the FAD-binding FR-type domain. Residues 425–445 (VSLCVAGGIGVTPFASILNTL) form a helical membrane-spanning segment. The Cytoplasmic portion of the chain corresponds to 446-578 (LDDWKPYKLR…RFEYNKESFS (133 aa)).

As to quaternary structure, interacts with protein disulfide isomerase. Interacts with, relocalizes and stabilizes CYBA/p22phox. Interacts with TLR4. Interacts with PPP1R15A. Interacts with LRRC8A; this interaction prevents the ubiquitin-mediated degradation of LRRC8A. Heme is required as a cofactor. Post-translationally, deubiquitinated by USP19. In terms of processing, N-glycosylated and glycosylation is required for its proper function. N-glycosylated. Expressed by distal tubular cells in kidney cortex and in endothelial cells (at protein level). Widely expressed. Strongly expressed in kidney and to a lower extent in heart, adipocytes, hepatoma, endothelial cells, skeletal muscle, brain, several brain tumor cell lines and airway epithelial cells.

Its subcellular location is the cytoplasm. The protein resides in the endoplasmic reticulum membrane. It localises to the cell membrane. It is found in the cell junction. The protein localises to the focal adhesion. Its subcellular location is the nucleus. The protein resides in the nucleolus. It localises to the perinuclear region. It catalyses the reaction NADPH + 2 O2 = 2 superoxide + NADP(+) + H(+). The enzyme catalyses NADPH + O2 + H(+) = H2O2 + NADP(+). Its activity is regulated as follows. Inhibited by plumbagin. Activated by phorbol 12-myristate 13-acetate (PMA). Activated by insulin. Inhibited by diphenylene iodonium. Its function is as follows. NADPH oxidase that catalyzes predominantly the reduction of oxygen to H2O2. Can also catalyze to a smaller extent, the reduction of oxygen to superoxide. May function as an oxygen sensor regulating the KCNK3/TASK-1 potassium channel and HIF1A activity. May regulate insulin signaling cascade. May play a role in apoptosis, bone resorption and lipolysaccharide-mediated activation of NFKB. May produce superoxide in the nucleus and play a role in regulating gene expression upon cell stimulation. Promotes ferroptosis, reactive oxygen species production and reduced glutathione (GSH) levels by activating NLRP3 inflammasome activation and cytokine release. Functionally, NADPH oxidase that catalyzes the generation of superoxide from molecular oxygen utilizing NADPH as an electron donor. Involved in redox signaling in vascular cells. Modulates the nuclear activation of ERK1/2 and the ELK1 transcription factor, and is capable of inducing nuclear DNA damage. Lacks superoxide-generating NADPH oxidase activity. The protein is NADPH oxidase 4 (NOX4) of Homo sapiens (Human).